We begin with the raw amino-acid sequence, 381 residues long: cAMP-dependent protein kinase type I-beta regulatory subunit (381 aa).

The interval 1–136 is dimerization and phosphorylation; sequence MASPSCFHSE…ALAKAISKNV (136 aa). The residue at position 3 (serine 3) is a Phosphoserine. Tyrosine 21 is modified (3'-nitrotyrosine). Positions 66–88 are disordered; it reads LARQKSNSQCDSHDEEISPTPPN. Phosphoserine is present on residues serine 77 and serine 83. Threonine 85 bears the Phosphothreonine mark. Positions 96 to 100 match the Pseudophosphorylation motif motif; sequence RRGGV. At arginine 97 the chain carries Omega-N-methylarginine. 3',5'-cyclic AMP is bound by residues 137–254, glutamate 202, arginine 211, 255–381, glutamate 326, and arginine 335; these read LFSH…SKVS and ILES…SLTV.

The protein belongs to the cAMP-dependent kinase regulatory chain family. In terms of assembly, the inactive holoenzyme is composed of two regulatory chains and two catalytic chains. Activation by cAMP releases the two active catalytic monomers and the regulatory dimer. Interacts with PRKX; regulates this cAMP-dependent protein kinase. Interacts with smAKAP; this interaction may target PRKAR1B to the plasma membrane. In terms of processing, the pseudophosphorylation site binds to the substrate-binding region of the catalytic chain, resulting in the inhibition of its activity. In terms of tissue distribution, four types of regulatory chains are found: I-alpha, I-beta, II-alpha, and II-beta. Their expression varies among tissues and is in some cases constitutive and in others inducible.

It is found in the cell membrane. Functionally, regulatory subunit of the cAMP-dependent protein kinases involved in cAMP signaling in cells. In Mus musculus (Mouse), this protein is cAMP-dependent protein kinase type I-beta regulatory subunit (Prkar1b).